A 215-amino-acid polypeptide reads, in one-letter code: Protein GrpE (215 aa).

The segment covering 1–28 has biased composition (polar residues); it reads MKHTSDTPSNSDMPSDSQATQPNASATG. A disordered region spans residues 1–52; sequence MKHTSDTPSNSDMPSDSQATQPNASATGQAAHAYSSQAQRASADAQAVAGDE. Over residues 29-52 the composition is skewed to low complexity; that stretch reads QAAHAYSSQAQRASADAQAVAGDE.

This sequence belongs to the GrpE family. As to quaternary structure, homodimer.

The protein resides in the cytoplasm. Functionally, participates actively in the response to hyperosmotic and heat shock by preventing the aggregation of stress-denatured proteins, in association with DnaK and GrpE. It is the nucleotide exchange factor for DnaK and may function as a thermosensor. Unfolded proteins bind initially to DnaJ; upon interaction with the DnaJ-bound protein, DnaK hydrolyzes its bound ATP, resulting in the formation of a stable complex. GrpE releases ADP from DnaK; ATP binding to DnaK triggers the release of the substrate protein, thus completing the reaction cycle. Several rounds of ATP-dependent interactions between DnaJ, DnaK and GrpE are required for fully efficient folding. The polypeptide is Protein GrpE (Ralstonia pickettii (strain 12J)).